The following is a 510-amino-acid chain: NAD(P)H-quinone oxidoreductase subunit 2 B, chloroplastic (510 aa).

13 consecutive transmembrane segments (helical) span residues 24–44 (LLLF…GLIL), 57–77 (IPWL…ALLF), 99–119 (IFQF…VEYI), 124–144 (MAIT…MFLC), 149–169 (LITI…LSGY), 183–203 (YLLM…WLYG), 227–247 (PGIS…LSLA), 295–315 (WHLL…LIAI), 323–343 (MLAY…IVGD), 354–374 (YMLF…LFGL), 395–415 (ALSL…AGFF), 418–438 (LHLF…IGLL), and 482–502 (LSMI…NPIV).

Belongs to the complex I subunit 2 family. In terms of assembly, NDH is composed of at least 16 different subunits, 5 of which are encoded in the nucleus.

It is found in the plastid. Its subcellular location is the chloroplast thylakoid membrane. The enzyme catalyses a plastoquinone + NADH + (n+1) H(+)(in) = a plastoquinol + NAD(+) + n H(+)(out). It carries out the reaction a plastoquinone + NADPH + (n+1) H(+)(in) = a plastoquinol + NADP(+) + n H(+)(out). Functionally, NDH shuttles electrons from NAD(P)H:plastoquinone, via FMN and iron-sulfur (Fe-S) centers, to quinones in the photosynthetic chain and possibly in a chloroplast respiratory chain. The immediate electron acceptor for the enzyme in this species is believed to be plastoquinone. Couples the redox reaction to proton translocation, and thus conserves the redox energy in a proton gradient. The polypeptide is NAD(P)H-quinone oxidoreductase subunit 2 B, chloroplastic (Manihot esculenta (Cassava)).